Reading from the N-terminus, the 69-residue chain is MKAKEIRDLTTSEIEEQIKSSKEELFNLRFQLATGQLEETARIRTVRKTIARLKTVAREREIEQSKANQ.

The protein belongs to the universal ribosomal protein uL29 family.

This Staphylococcus aureus (strain Mu3 / ATCC 700698) protein is Large ribosomal subunit protein uL29.